The following is a 113-amino-acid chain: Large ribosomal subunit protein uL22 (113 aa).

Belongs to the universal ribosomal protein uL22 family. As to quaternary structure, part of the 50S ribosomal subunit.

This protein binds specifically to 23S rRNA; its binding is stimulated by other ribosomal proteins, e.g. L4, L17, and L20. It is important during the early stages of 50S assembly. It makes multiple contacts with different domains of the 23S rRNA in the assembled 50S subunit and ribosome. Functionally, the globular domain of the protein is located near the polypeptide exit tunnel on the outside of the subunit, while an extended beta-hairpin is found that lines the wall of the exit tunnel in the center of the 70S ribosome. This Bacillus cytotoxicus (strain DSM 22905 / CIP 110041 / 391-98 / NVH 391-98) protein is Large ribosomal subunit protein uL22.